We begin with the raw amino-acid sequence, 333 residues long: MTMTVEKRIEADVTVSHEGVERAYVTFLAGNKDYWMLVVGLAKGLRKVKSAYPLVVATLPDVPEEHRQILVDQGCIIRDIEPVYPPENTTGYSMAYYVINYSKLRIWEFVEYEKMIYLDGDIQVFKNIDHLFDTPRGYLYAVKDCFCEVSWSKTPQYKIGYCQQSPEKVTWPVESLGAPPPVYFNAGMLVFGPNLVTYEDLLRVVQITTPTYFAEQDFLNIYFRDIYKPIPSTYNLVMAMLWRHPEHIDLDQISVVHYCANGSKPWKFDEAEEHMDREDIKMLVKKWWEIYEDSSLDYKNFVETESKLNPVTATLASKKLVGDVLTSLAPSAA.

Lysine 103 is an active-site residue. Positions 119, 121, and 257 each coordinate Mn(2+).

It belongs to the glycosyltransferase 8 family. Galactosyltransferase subfamily. A divalent metal cation serves as cofactor.

It is found in the cytoplasm. The enzyme catalyses myo-inositol + UDP-alpha-D-galactose = alpha-D-galactosyl-(1-&gt;3)-1D-myo-inositol + UDP + H(+). Its function is as follows. Galactinol synthase involved in the biosynthesis of raffinose family oligosaccharides (RFOs) that function as osmoprotectants. May promote plant stress tolerance. In Arabidopsis thaliana (Mouse-ear cress), this protein is Galactinol synthase 5 (GOLS5).